We begin with the raw amino-acid sequence, 191 residues long: Ribonuclease MC (191 aa).

RNA is bound at residue Q9. A disulfide bond links C15 and C23. Residues H34, 72-73, R75, F81, 84-85, and 88-89 contribute to the RNA site; these read NV, HE, and KH. Residue H34 is the Proton donor of the active site. 3 disulfides stabilise this stretch: C48-C92, C152-C185, and C169-C180. Residue E85 is part of the active site. Catalysis depends on H89, which acts as the Proton acceptor.

The protein belongs to the RNase T2 family.

The enzyme catalyses a ribonucleotidyl-ribonucleotide-RNA + H2O = a 3'-end 3'-phospho-ribonucleotide-RNA + a 5'-end dephospho-ribonucleoside-RNA + H(+). Ribonuclease cleaving preferentially the 5'-side of uridine. The sequence is that of Ribonuclease MC from Momordica charantia (Bitter gourd).